Consider the following 522-residue polypeptide: Cytochrome b mRNA maturase bI3 (522 aa).

Over 1-31 the chain is Mitochondrial matrix; that stretch reads MTIRKSNPYLSLVNSYLMDSPQPSSMNYWWN. The cytochrome b stretch occupies residues 1 to 163; it reads MTIRKSNPYL…MPFMGGDLVP (163 aa). Residues 32-52 traverse the membrane as a helical segment; sequence VGSLLGLCLVMQMASGMFLAM. The Mitochondrial intermembrane segment spans residues 53–84; sequence HYSSSMELAFNSVEHMMRDVNAGWLMRYIHAN. The chain crosses the membrane as a helical span at residues 85-105; that stretch reads GASFFFMCLYLHMGKALYYGS. Over 106–110 the chain is Mitochondrial matrix; that stretch reads YKSPR. The helical transmembrane segment at 111-131 threads the bilayer; it reads VLVWSMGVMMFMLTMATAFMG. Topologically, residues 132–154 are mitochondrial intermembrane; the sequence is YCLVYGQMSHWGATVITNLLSAM. A helical membrane pass occupies residues 155 to 175; the sequence is PFMGGDLVPLSIILSLYLLYI. Positions 164-522 are maturase; sequence LSIILSLYLL…PYMSWHQKEQ (359 aa). Over 176 to 522 the chain is Mitochondrial matrix; that stretch reads SLKTFMKMIF…PYMSWHQKEQ (347 aa).

It in the N-terminal section; belongs to the cytochrome b family. This sequence in the C-terminal section; belongs to the LAGLIDADG endonuclease family.

The protein localises to the mitochondrion inner membrane. In terms of biological role, mitochondrial mRNA maturase required for splicing of intron 3 of the cytochrome b (COB) gene, containing its own coding sequence. The sequence is that of Cytochrome b mRNA maturase bI3 (bI3) from Debaryomyces hansenii (strain ATCC 36239 / CBS 767 / BCRC 21394 / JCM 1990 / NBRC 0083 / IGC 2968) (Yeast).